Reading from the N-terminus, the 416-residue chain is Lipase (416 aa).

The N-terminal stretch at 1–28 (MKCCRIMFVLLGLWFVFGLSVPGGRTEA) is a signal peptide. Ser-141 functions as the Nucleophile in the catalytic mechanism. Gly-314 is a Ca(2+) binding site. The Charge relay system role is filled by Asp-345. Residue Asp-385 coordinates Ca(2+). His-386 functions as the Charge relay system in the catalytic mechanism. Glu-388, Asp-393, and Pro-394 together coordinate Ca(2+).

This sequence belongs to the AB hydrolase superfamily. Homodimer.

Its subcellular location is the secreted. It catalyses the reaction a triacylglycerol + H2O = a diacylglycerol + a fatty acid + H(+). Activity is inhibited by zinc and iron ions, and activated in vitro in 25% v/v DMSO and acetone. In terms of biological role, triacylglycerol hydrolase that shows hydrolysis preference towards some of the natural oils such as olive, sunflower and corn oils. This Bacillus sp protein is Lipase.